The sequence spans 473 residues: Photosystem II CP43 reaction center protein (473 aa).

The propeptide occupies 1–14 (MKILYSLRRFYHVE). The residue at position 15 (Thr15) is an N-acetylthreonine. Residue Thr15 is modified to Phosphothreonine. 5 helical membrane passes run 69–93 (LFEV…PHLA), 134–155 (LLGP…KDRN), 178–200 (KALY…RKIT), 255–275 (KPFA…LSYS), and 291–312 (WFNN…ASQA). Position 367 (Glu367) interacts with [CaMn4O5] cluster. The chain crosses the membrane as a helical span at residues 447-471 (RARAAAAGFEKGIDRDLEPVLYMNP).

This sequence belongs to the PsbB/PsbC family. PsbC subfamily. PSII is composed of 1 copy each of membrane proteins PsbA, PsbB, PsbC, PsbD, PsbE, PsbF, PsbH, PsbI, PsbJ, PsbK, PsbL, PsbM, PsbT, PsbX, PsbY, PsbZ, Psb30/Ycf12, at least 3 peripheral proteins of the oxygen-evolving complex and a large number of cofactors. It forms dimeric complexes. Binds multiple chlorophylls and provides some of the ligands for the Ca-4Mn-5O cluster of the oxygen-evolving complex. It may also provide a ligand for a Cl- that is required for oxygen evolution. PSII binds additional chlorophylls, carotenoids and specific lipids. serves as cofactor.

The protein resides in the plastid. Its subcellular location is the chloroplast thylakoid membrane. In terms of biological role, one of the components of the core complex of photosystem II (PSII). It binds chlorophyll and helps catalyze the primary light-induced photochemical processes of PSII. PSII is a light-driven water:plastoquinone oxidoreductase, using light energy to abstract electrons from H(2)O, generating O(2) and a proton gradient subsequently used for ATP formation. The chain is Photosystem II CP43 reaction center protein from Lolium perenne (Perennial ryegrass).